The following is a 588-amino-acid chain: Glutamate--tRNA ligase (588 aa).

Positions 112-122 (PNPDFYLHLGS) match the 'HIGH' region motif.

Belongs to the class-I aminoacyl-tRNA synthetase family. Glutamate--tRNA ligase type 2 subfamily.

Its subcellular location is the cytoplasm. The enzyme catalyses tRNA(Glu) + L-glutamate + ATP = L-glutamyl-tRNA(Glu) + AMP + diphosphate. In terms of biological role, catalyzes the attachment of glutamate to tRNA(Glu) in a two-step reaction: glutamate is first activated by ATP to form Glu-AMP and then transferred to the acceptor end of tRNA(Glu). This Caldivirga maquilingensis (strain ATCC 700844 / DSM 13496 / JCM 10307 / IC-167) protein is Glutamate--tRNA ligase.